Here is a 195-residue protein sequence, read N- to C-terminus: N-terminal acetyltransferase B complex catalytic subunit NAT3 (195 aa).

Residues 2 to 172 (TTIQPFEPVD…DAFDMRKAMA (171 aa)) enclose the N-acetyltransferase domain.

This sequence belongs to the acetyltransferase family. GNAT subfamily. As to quaternary structure, component of the N-terminal acetyltransferase B (NatB) complex, which is composed of NAT3 and MDM20.

It localises to the cytoplasm. It catalyses the reaction N-terminal L-methionyl-L-asparaginyl-[protein] + acetyl-CoA = N-terminal N(alpha)-acetyl-L-methionyl-L-asparaginyl-[protein] + CoA + H(+). It carries out the reaction N-terminal L-methionyl-L-glutaminyl-[protein] + acetyl-CoA = N-terminal N(alpha)-acetyl-L-methionyl-L-glutaminyl-[protein] + CoA + H(+). The catalysed reaction is N-terminal L-methionyl-L-aspartyl-[protein] + acetyl-CoA = N-terminal N(alpha)-acetyl-L-methionyl-L-aspartyl-[protein] + CoA + H(+). The enzyme catalyses N-terminal L-methionyl-L-glutamyl-[protein] + acetyl-CoA = N-terminal N(alpha)-acetyl-L-methionyl-L-glutamyl-[protein] + CoA + H(+). Functionally, catalytic subunit of the NatB N-terminal acetyltransferase, which catalyzes acetylation of the amino-terminal methionine residues of all proteins beginning with Met-Asp or Met-Glu and of some proteins beginning with Met-Asn, Met-Gln or Met-Met. NatB acetylates TPM1 protein and regulates tropomyocin-actin interactions, it is presumed to N-acetylate 15% of all yeast proteins. This Saccharomyces cerevisiae (strain ATCC 204508 / S288c) (Baker's yeast) protein is N-terminal acetyltransferase B complex catalytic subunit NAT3.